We begin with the raw amino-acid sequence, 413 residues long: SET and MYND domain-containing protein DDB_G0273591 (413 aa).

Residues 6–311 enclose the SET domain; that stretch reads DGLKLSNSEL…KGDQINISYL (306 aa). The segment at 51–95 adopts an MYND-type zinc-finger fold; the sequence is CYNCIKLIKSPSPQQVPRCFGCNEVWYCSEKCKQDNQAKHQHYEC. Residues 205–232 are disordered; it reads DNNNNNNNNNNNNNNNNNNNNNNNNNNN. Residues 216–243 are a coiled coil; it reads NNNNNNNNNNNNNNNNNNNIEELIKLIR.

It belongs to the class V-like SAM-binding methyltransferase superfamily.

Probable methyltransferase. The polypeptide is SET and MYND domain-containing protein DDB_G0273591 (Dictyostelium discoideum (Social amoeba)).